The sequence spans 107 residues: Latency-related protein 2 (107 aa).

Over residues 1–44 the composition is skewed to pro residues; that stretch reads MAPPLPRTPTPTHPHSHAPPLPRTPTPAHPHSHAPPLPRTPTPT. Residues 1–63 are disordered; sequence MAPPLPRTPT…SIQHRQGKDT (63 aa). Repeat copies occupy residues 2-17, 18-33, and 34-49. A 3 X 17 AA tandem repeats region spans residues 2-49; sequence APPLPRTPTPTHPHSHAPPLPRTPTPAHPHSHAPPLPRTPTPTHPHSH. Residues 46-58 show a composition bias toward basic residues; the sequence is PHSHAPPRSIQHR.

The sequence is that of Latency-related protein 2 from Homo sapiens (Human).